The chain runs to 85 residues: Dual endothelin-1/VEGF signal peptide receptor (85 aa).

Residues 1-18 (MTMFKGSNEMKSRWNWGS) lie on the Extracellular side of the membrane. The chain crosses the membrane as a helical span at residues 19–37 (ITCIICFTCVGSQLSMSSS). Residues 38 to 85 (KASNFSGPLQLYQRELEIFIVLTDVPNYRLIKENSHLHTTIVDQGRTV) lie on the Cytoplasmic side of the membrane.

In terms of processing, N-glycosylated. Expressed in kidney. Expressed in endothelial cells.

The protein resides in the cell membrane. In terms of biological role, dual receptor for both endothelin-1 and the signal sequence of vascular endothelial growth factor A. Does not act as a receptor for angiotensin-2. Does not bind the VEGFA mature protein. May play a role in angiogenesis with a significant role in cardiovascular and neural development. The polypeptide is Dual endothelin-1/VEGF signal peptide receptor (Homo sapiens (Human)).